A 96-amino-acid chain; its full sequence is uncharacterized protein (96 aa).

The signal sequence occupies residues 1–19; that stretch reads MKFLSALLLIVLLISVVFG. Asn20 carries an N-linked (GlcNAc...) asparagine glycan. Low complexity predominate over residues 27–46; the sequence is AWATTTTGGTTGSQTSPATH. The disordered stretch occupies residues 27–58; that stretch reads AWATTTTGGTTGSQTSPATHGGHGGNGGNGHS. Positions 47–56 are enriched in gly residues; the sequence is GGHGGNGGNG.

The protein resides in the secreted. This is an uncharacterized protein from Dictyostelium discoideum (Social amoeba).